We begin with the raw amino-acid sequence, 275 residues long: MSNSRQHQGHFARKRFGQNFLVDHGVIDSIVSTIGPARGQRMVEIGPGLGALTEPLIERLATPESPLHAVELDRDLIGRLQQRFGALLELHAGDALAFDFRSLAAPGDKPSLRIVGNLPYNISSPLLFHLMTFADAVIDQHFMLQNEVVERMVAEPGTKAFSRLSVMLQYRYVMEKMLDVPPESFQPPPKVDSAIVRMIPYEPHELPDVDPVLLGEVVTAAFSQRRKMLRNTLGDYRETIDFDALGFDLARRAEDVSVAEYVGVAQALAAVRKAG.

6 residues coordinate S-adenosyl-L-methionine: Asn-19, Leu-21, Gly-46, Glu-71, Asp-94, and Asn-117.

Belongs to the class I-like SAM-binding methyltransferase superfamily. rRNA adenine N(6)-methyltransferase family. RsmA subfamily.

It localises to the cytoplasm. It carries out the reaction adenosine(1518)/adenosine(1519) in 16S rRNA + 4 S-adenosyl-L-methionine = N(6)-dimethyladenosine(1518)/N(6)-dimethyladenosine(1519) in 16S rRNA + 4 S-adenosyl-L-homocysteine + 4 H(+). Specifically dimethylates two adjacent adenosines (A1518 and A1519) in the loop of a conserved hairpin near the 3'-end of 16S rRNA in the 30S particle. May play a critical role in biogenesis of 30S subunits. The polypeptide is Ribosomal RNA small subunit methyltransferase A (Burkholderia lata (strain ATCC 17760 / DSM 23089 / LMG 22485 / NCIMB 9086 / R18194 / 383)).